We begin with the raw amino-acid sequence, 161 residues long: Nucleotide-binding protein Tbd_1846 (161 aa).

This sequence belongs to the YajQ family.

Functionally, nucleotide-binding protein. The polypeptide is Nucleotide-binding protein Tbd_1846 (Thiobacillus denitrificans (strain ATCC 25259 / T1)).